Here is a 98-residue protein sequence, read N- to C-terminus: Small ribosomal subunit protein bS20 (98 aa).

The span at Met-1–Arg-15 shows a compositional bias: basic residues. Residues Met-1–Arg-21 form a disordered region.

Belongs to the bacterial ribosomal protein bS20 family.

Binds directly to 16S ribosomal RNA. This is Small ribosomal subunit protein bS20 from Chlamydia felis (strain Fe/C-56) (Chlamydophila felis).